Consider the following 452-residue polypeptide: Chromosomal replication initiator protein DnaA (452 aa).

The domain I, interacts with DnaA modulators stretch occupies residues 1 to 80; sequence MSSTVSTLWR…NNDQFMVKIQ (80 aa). Positions 80 to 114 are domain II; the sequence is QDGIKPTEKTTTNVEQKTQNENCHNEITSQQNYRS. The interval 115 to 332 is domain III, AAA+ region; the sequence is YLNKNHVFDN…GALNRVHAHA (218 aa). Gly160, Gly162, Lys163, and Thr164 together coordinate ATP. The tract at residues 333 to 452 is domain IV, binds dsDNA; it reads EFTGKAITID…WSNLIRTLSV (120 aa).

The protein belongs to the DnaA family. As to quaternary structure, oligomerizes as a right-handed, spiral filament on DNA at oriC.

It is found in the cytoplasm. Its function is as follows. Plays an essential role in the initiation and regulation of chromosomal replication. ATP-DnaA binds to the origin of replication (oriC) to initiate formation of the DNA replication initiation complex once per cell cycle. Binds the DnaA box (a 9 base pair repeat at the origin) and separates the double-stranded (ds)DNA. Forms a right-handed helical filament on oriC DNA; dsDNA binds to the exterior of the filament while single-stranded (ss)DNA is stabiized in the filament's interior. The ATP-DnaA-oriC complex binds and stabilizes one strand of the AT-rich DNA unwinding element (DUE), permitting loading of DNA polymerase. After initiation quickly degrades to an ADP-DnaA complex that is not apt for DNA replication. Binds acidic phospholipids. The polypeptide is Chromosomal replication initiator protein DnaA (Histophilus somni (strain 129Pt) (Haemophilus somnus)).